The primary structure comprises 113 residues: Large ribosomal subunit protein P2 (113 aa).

The interval 66–113 (PVGGGGAVAAADAAPAAAAGGDKKEAKKEEKKEESESEDDDMGFALFE) is disordered. Residues 73–85 (VAAADAAPAAAAG) show a composition bias toward low complexity. The segment covering 86 to 99 (GDKKEAKKEEKKEE) has biased composition (basic and acidic residues). Residues Ser100 and Ser102 each carry the phosphoserine modification.

This sequence belongs to the eukaryotic ribosomal protein P1/P2 family. P1 and P2 exist as dimers at the large ribosomal subunit.

Functionally, plays an important role in the elongation step of protein synthesis. The protein is Large ribosomal subunit protein P2 (RpLP2) of Drosophila melanogaster (Fruit fly).